Here is a 304-residue protein sequence, read N- to C-terminus: Probable phytol kinase 2, chloroplastic (304 aa).

A chloroplast-targeting transit peptide spans 1–59; that stretch reads MVSLISAHLLSLPSSAPRSRPQSRPPLSPPAAAAAASCSFDLPRPRRLVADGSRRKGTM. 7 helical membrane passes run 68 to 88, 113 to 133, 134 to 154, 170 to 190, 194 to 214, 231 to 251, and 256 to 276; these read SGLA…LALL, IGMV…APFL, AAVA…GVMK, ELLK…SIFW, PIAI…DIVG, AGSI…MHYF, and FIEE…TAAL.

The protein belongs to the polyprenol kinase family.

The protein resides in the plastid. Its subcellular location is the chloroplast membrane. It catalyses the reaction phytol + CTP = phytyl phosphate + CDP + H(+). The protein operates within cofactor biosynthesis; tocopherol biosynthesis. Functionally, involved in the activation and reutilization of phytol from chlorophyll degradation in plant metabolism, including tocopherol biosynthesis. Catalyzes the conversion of phytol to phytol monophosphate (PMP). This Oryza sativa subsp. japonica (Rice) protein is Probable phytol kinase 2, chloroplastic.